A 90-amino-acid chain; its full sequence is Putative toxin RelE1 (90 aa).

The protein belongs to the RelE toxin family.

In terms of biological role, toxic component of a type II toxin-antitoxin (TA) system. Its cognate antitoxin is RelB1 (Potential). This Methanocaldococcus jannaschii (strain ATCC 43067 / DSM 2661 / JAL-1 / JCM 10045 / NBRC 100440) (Methanococcus jannaschii) protein is Putative toxin RelE1 (relE1).